The primary structure comprises 31 residues: Photosystem II reaction center protein T (31 aa).

A helical membrane pass occupies residues 3 to 23 (ALVYTFLLIGTLGVIFFAIFF).

It belongs to the PsbT family. In terms of assembly, PSII is composed of 1 copy each of membrane proteins PsbA, PsbB, PsbC, PsbD, PsbE, PsbF, PsbH, PsbI, PsbJ, PsbK, PsbL, PsbM, PsbT, PsbY, PsbZ, Psb30/Ycf12, at least 3 peripheral proteins of the oxygen-evolving complex and a large number of cofactors. It forms dimeric complexes.

Its subcellular location is the plastid. The protein resides in the chloroplast thylakoid membrane. Found at the monomer-monomer interface of the photosystem II (PS II) dimer, plays a role in assembly and dimerization of PSII. PSII is a light-driven water plastoquinone oxidoreductase, using light energy to abstract electrons from H(2)O, generating a proton gradient subsequently used for ATP formation. The sequence is that of Photosystem II reaction center protein T from Euglena gracilis.